Here is a 218-residue protein sequence, read N- to C-terminus: C-type lectin domain family 2 member H (218 aa).

The Cytoplasmic portion of the chain corresponds to 1 to 52 (MNAAKVETSSMGMLQRADLTAADCLQEGEMGKKIQGKCFRIISTVSPVKLYC). A helical; Signal-anchor for type II membrane protein membrane pass occupies residues 53–73 (CYGVIMVLTVAVIALSVALSV). The Extracellular segment spans residues 74-218 (RNKIPAMEDR…SRVGSVPRHV (145 aa)). An intrachain disulfide couples Cys90 to Cys101. In terms of domain architecture, C-type lectin spans 97–201 (FGSKCFYFSE…SYTHRKWICS (105 aa)). Asn110 carries an N-linked (GlcNAc...) asparagine glycan. A disulfide bridge connects residues Cys118 and Cys200.

Detected in ileum, liver, kidney and in IL2-activated natural killer cells.

It is found in the cell membrane. In terms of biological role, lectin-type cell surface receptor. This chain is C-type lectin domain family 2 member H (Clec2h), found in Mus musculus (Mouse).